A 343-amino-acid chain; its full sequence is Thiamine-phosphate synthase (343 aa).

The interval 1-123 (MQQASPTAIA…GACCKQLRYR (123 aa)) is unknown. The thiamine-phosphate synthase stretch occupies residues 124–343 (VYALESGLLG…LLTQLSRINP (220 aa)). 4-amino-2-methyl-5-(diphosphooxymethyl)pyrimidine is bound by residues 171-175 (QYRDK) and asparagine 203. Mg(2+)-binding residues include aspartate 204 and aspartate 223. Serine 242 provides a ligand contact to 4-amino-2-methyl-5-(diphosphooxymethyl)pyrimidine. Position 268–270 (268–270 (TPT)) interacts with 2-[(2R,5Z)-2-carboxy-4-methylthiazol-5(2H)-ylidene]ethyl phosphate. Lysine 271 contacts 4-amino-2-methyl-5-(diphosphooxymethyl)pyrimidine. A 2-[(2R,5Z)-2-carboxy-4-methylthiazol-5(2H)-ylidene]ethyl phosphate-binding site is contributed by glycine 298.

Belongs to the thiamine-phosphate synthase family. Mg(2+) serves as cofactor.

It carries out the reaction 2-[(2R,5Z)-2-carboxy-4-methylthiazol-5(2H)-ylidene]ethyl phosphate + 4-amino-2-methyl-5-(diphosphooxymethyl)pyrimidine + 2 H(+) = thiamine phosphate + CO2 + diphosphate. The catalysed reaction is 2-(2-carboxy-4-methylthiazol-5-yl)ethyl phosphate + 4-amino-2-methyl-5-(diphosphooxymethyl)pyrimidine + 2 H(+) = thiamine phosphate + CO2 + diphosphate. It catalyses the reaction 4-methyl-5-(2-phosphooxyethyl)-thiazole + 4-amino-2-methyl-5-(diphosphooxymethyl)pyrimidine + H(+) = thiamine phosphate + diphosphate. It functions in the pathway cofactor biosynthesis; thiamine diphosphate biosynthesis; thiamine phosphate from 4-amino-2-methyl-5-diphosphomethylpyrimidine and 4-methyl-5-(2-phosphoethyl)-thiazole: step 1/1. Functionally, condenses 4-methyl-5-(beta-hydroxyethyl)thiazole monophosphate (THZ-P) and 2-methyl-4-amino-5-hydroxymethyl pyrimidine pyrophosphate (HMP-PP) to form thiamine monophosphate (TMP). The sequence is that of Thiamine-phosphate synthase from Synechocystis sp. (strain ATCC 27184 / PCC 6803 / Kazusa).